The sequence spans 328 residues: MKFGIEFVPSDPALKIAYYAKLSEQQGFDHVWITDHYNNRDVYSTLTVLALNTNSIKIGPGVTNSYTRNPAITASSIASIAEISGGRAVLGLGPGDKATFDAMGIAWKKPLATTKEAIQAIRDFISGKKVSMDGEMIKFAGAKLAFKAGNIPIYMGAQGPKMLELAGEIADGVLINASHPKDFEVAVEQIKKGAEKAGRDPSEVDVTAYACFSIDKDPVKAVNAAKVVVAFIVAGSPDLVLERHGIPVEAKSQIGAAIAKGDFGALMGGLVTPQMIEAFSICGTPDDCMKRIKDLEAIGVTQIVAGSPIGPAKEKAIKLIGKEIIAKM.

This sequence belongs to the mer family.

It localises to the cytoplasm. It carries out the reaction 5-methyl-5,6,7,8-tetrahydromethanopterin + oxidized coenzyme F420-(gamma-L-Glu)(n) + H(+) = 5,10-methylenetetrahydromethanopterin + reduced coenzyme F420-(gamma-L-Glu)(n). It participates in one-carbon metabolism; methanogenesis from CO(2); methyl-coenzyme M from 5,10-methylene-5,6,7,8-tetrahydromethanopterin: step 1/2. Its function is as follows. Catalyzes the reversible reduction of methylene-H(4)MPT to methyl-H(4)MPT. The protein is 5,10-methylenetetrahydromethanopterin reductase of Methanosarcina barkeri (strain Fusaro / DSM 804).